A 251-amino-acid chain; its full sequence is Pyruvate formate-lyase-activating enzyme (251 aa).

A Radical SAM core domain is found at V15 to N244. [4Fe-4S] cluster contacts are provided by C29, C33, and C36. Residues Y35–H37, G79, D134–K136, and H207 contribute to the S-adenosyl-L-methionine site.

It belongs to the organic radical-activating enzymes family. [4Fe-4S] cluster is required as a cofactor.

The protein resides in the cytoplasm. The enzyme catalyses glycyl-[formate C-acetyltransferase] + reduced [flavodoxin] + S-adenosyl-L-methionine = glycin-2-yl radical-[formate C-acetyltransferase] + semiquinone [flavodoxin] + 5'-deoxyadenosine + L-methionine + H(+). Functionally, activation of pyruvate formate-lyase under anaerobic conditions by generation of an organic free radical, using S-adenosylmethionine and reduced flavodoxin as cosubstrates to produce 5'-deoxy-adenosine. This chain is Pyruvate formate-lyase-activating enzyme (pflA), found in Staphylococcus epidermidis (strain ATCC 12228 / FDA PCI 1200).